Consider the following 89-residue polypeptide: Small ribosomal subunit protein uS15 (89 aa).

Belongs to the universal ribosomal protein uS15 family. In terms of assembly, part of the 30S ribosomal subunit. Forms a bridge to the 50S subunit in the 70S ribosome, contacting the 23S rRNA.

One of the primary rRNA binding proteins, it binds directly to 16S rRNA where it helps nucleate assembly of the platform of the 30S subunit by binding and bridging several RNA helices of the 16S rRNA. In terms of biological role, forms an intersubunit bridge (bridge B4) with the 23S rRNA of the 50S subunit in the ribosome. This Polynucleobacter necessarius subsp. necessarius (strain STIR1) protein is Small ribosomal subunit protein uS15.